Reading from the N-terminus, the 84-residue chain is Small ribosomal subunit protein uS17 (84 aa).

The protein belongs to the universal ribosomal protein uS17 family. As to quaternary structure, part of the 30S ribosomal subunit.

In terms of biological role, one of the primary rRNA binding proteins, it binds specifically to the 5'-end of 16S ribosomal RNA. This chain is Small ribosomal subunit protein uS17, found in Porphyromonas gingivalis (strain ATCC 33277 / DSM 20709 / CIP 103683 / JCM 12257 / NCTC 11834 / 2561).